The chain runs to 214 residues: Thiamine-phosphate synthase (214 aa).

Residues 37-41 (QLRDK) and N69 each bind 4-amino-2-methyl-5-(diphosphooxymethyl)pyrimidine. Residues D70 and D89 each contribute to the Mg(2+) site. S108 is a 4-amino-2-methyl-5-(diphosphooxymethyl)pyrimidine binding site. 134–136 (TDS) is a 2-[(2R,5Z)-2-carboxy-4-methylthiazol-5(2H)-ylidene]ethyl phosphate binding site. A 4-amino-2-methyl-5-(diphosphooxymethyl)pyrimidine-binding site is contributed by K137. 2-[(2R,5Z)-2-carboxy-4-methylthiazol-5(2H)-ylidene]ethyl phosphate contacts are provided by residues G167 and 187–188 (IS).

Belongs to the thiamine-phosphate synthase family. Mg(2+) is required as a cofactor.

The enzyme catalyses 2-[(2R,5Z)-2-carboxy-4-methylthiazol-5(2H)-ylidene]ethyl phosphate + 4-amino-2-methyl-5-(diphosphooxymethyl)pyrimidine + 2 H(+) = thiamine phosphate + CO2 + diphosphate. It catalyses the reaction 2-(2-carboxy-4-methylthiazol-5-yl)ethyl phosphate + 4-amino-2-methyl-5-(diphosphooxymethyl)pyrimidine + 2 H(+) = thiamine phosphate + CO2 + diphosphate. The catalysed reaction is 4-methyl-5-(2-phosphooxyethyl)-thiazole + 4-amino-2-methyl-5-(diphosphooxymethyl)pyrimidine + H(+) = thiamine phosphate + diphosphate. The protein operates within cofactor biosynthesis; thiamine diphosphate biosynthesis; thiamine phosphate from 4-amino-2-methyl-5-diphosphomethylpyrimidine and 4-methyl-5-(2-phosphoethyl)-thiazole: step 1/1. Condenses 4-methyl-5-(beta-hydroxyethyl)thiazole monophosphate (THZ-P) and 2-methyl-4-amino-5-hydroxymethyl pyrimidine pyrophosphate (HMP-PP) to form thiamine monophosphate (TMP). The sequence is that of Thiamine-phosphate synthase from Natronomonas pharaonis (strain ATCC 35678 / DSM 2160 / CIP 103997 / JCM 8858 / NBRC 14720 / NCIMB 2260 / Gabara) (Halobacterium pharaonis).